The chain runs to 308 residues: PHO85 cyclin-2 (308 aa).

Positions 18–146 (EMVQYLASTT…LLEYFDWDVT (129 aa)) constitute a Cyclin N-terminal domain. A disordered region spans residues 248–270 (SPRTYNIDSKHDNKENRPIPTIK). The segment covering 255-264 (DSKHDNKENR) has biased composition (basic and acidic residues).

Belongs to the cyclin family. PCL1,2 subfamily. Forms a cyclin-CDK complex with PHO85. Interacts with RVS167.

It is found in the cytoplasm. The protein resides in the nucleus. In terms of biological role, G1/S-specific cyclin partner of the cyclin-dependent kinase (CDK) PHO85. Essential for the control of the cell cycle at the G1/S (start) transition. Together with cyclin PCL1, positively controls degradation of sphingoid long chain base kinase LCB4. The PCL2-PHO85 cyclin-CDK holoenzyme phosphorylates LCB4, which is required for its ubiquitination and degradation. PCL2-PHO85 also phosphorylates RVS167, linking cyclin-CDK activity with organization of the actin cytoskeleton. This is PHO85 cyclin-2 (PCL2) from Saccharomyces cerevisiae (strain ATCC 204508 / S288c) (Baker's yeast).